A 227-amino-acid chain; its full sequence is H-2 class II histocompatibility antigen, A-U alpha chain (227 aa).

Residues Asp-1–Asn-82 form an alpha-1 region. At Asp-1–Glu-189 the chain is on the extracellular side. Residues Glu-83–Trp-176 form an alpha-2 region. The Ig-like C1-type domain maps to Pro-85–Glu-177. Cys-105 and Cys-161 form a disulfide bridge. An N-linked (GlcNAc...) asparagine glycan is attached at Asn-116. The segment at Glu-177–Glu-189 is connecting peptide. The helical transmembrane segment at Thr-190 to Leu-215 threads the bilayer. Residues Arg-216–Leu-227 are Cytoplasmic-facing.

This sequence belongs to the MHC class II family.

The protein localises to the membrane. In Mus musculus (Mouse), this protein is H-2 class II histocompatibility antigen, A-U alpha chain (H2-Aa).